The primary structure comprises 415 residues: Serine hydroxymethyltransferase (415 aa).

(6S)-5,6,7,8-tetrahydrofolate is bound by residues leucine 117 and 121-123 (GHL). Lysine 226 carries the post-translational modification N6-(pyridoxal phosphate)lysine.

This sequence belongs to the SHMT family. In terms of assembly, homodimer. The cofactor is pyridoxal 5'-phosphate.

The protein localises to the cytoplasm. It carries out the reaction (6R)-5,10-methylene-5,6,7,8-tetrahydrofolate + glycine + H2O = (6S)-5,6,7,8-tetrahydrofolate + L-serine. The protein operates within one-carbon metabolism; tetrahydrofolate interconversion. It participates in amino-acid biosynthesis; glycine biosynthesis; glycine from L-serine: step 1/1. Functionally, catalyzes the reversible interconversion of serine and glycine with tetrahydrofolate (THF) serving as the one-carbon carrier. This reaction serves as the major source of one-carbon groups required for the biosynthesis of purines, thymidylate, methionine, and other important biomolecules. Also exhibits THF-independent aldolase activity toward beta-hydroxyamino acids, producing glycine and aldehydes, via a retro-aldol mechanism. The sequence is that of Serine hydroxymethyltransferase from Dehalococcoides mccartyi (strain ATCC BAA-2100 / JCM 16839 / KCTC 5957 / BAV1).